Consider the following 5068-residue polypeptide: Protein piccolo (5068 aa).

A compositionally biased stretch (low complexity) spans Met1 to Ala20. Disordered stretches follow at residues Met1–Glu143 and Phe173–Ala524. Positions Pro93–Pro102 are enriched in pro residues. 3 stretches are compositionally biased toward basic and acidic residues: residues Arg111–Leu122, Lys133–Glu143, and Glu185–Lys199. Ser212 is subject to Phosphoserine. Over residues Pro232 to Ala241 the composition is skewed to polar residues. The segment covering Ala252 to Ala279 has biased composition (low complexity). Residues Thr319–Gly334 are compositionally biased toward polar residues. Pro residues-rich tracts occupy residues Pro391–Gln407 and Pro416–Gln487. Residues Pro401–Ser500 form a 10 X 10 AA tandem approximate repeats of P-A-K-P-Q-P-Q-Q-P-X region. Polar residues predominate over residues Ser495–Thr508. Residues Pro515 to Ala524 show a composition bias toward low complexity. Residues Cys532–Cys556 form a C4-type zinc finger. 4 disordered regions span residues Ala594 to Gly867, Leu883 to Asn1005, Leu1057 to Leu1345, and Val1364 to Glu1803. Polar residues predominate over residues Gln610–Ser625. The segment covering Pro626 to Lys644 has biased composition (basic and acidic residues). Low complexity predominate over residues Ser709–Leu738. Basic and acidic residues predominate over residues Glu782–Lys795. The span at Val809–Ser830 shows a compositional bias: low complexity. A phosphoserine mark is found at Ser844 and Ser856. Composition is skewed to polar residues over residues Ser856–Val865 and Leu883–His893. Thr860 carries the post-translational modification Phosphothreonine. Residues Cys997 to Cys1020 form a C4-type zinc finger. Residues Ser1073–Lys1085 are compositionally biased toward pro residues. Basic and acidic residues predominate over residues Lys1097 to Ser1116. A Phosphothreonine modification is found at Thr1120. Basic and acidic residues-rich tracts occupy residues Pro1144–Pro1165, Leu1172–Pro1186, Pro1244–Asp1253, and Thr1262–Asp1283. Positions Pro1290–Ile1306 are enriched in polar residues. Phosphoserine is present on residues Ser1292, Ser1302, Ser1303, Ser1332, Ser1334, Ser1337, Ser1338, and Ser1341. The segment covering Ser1319 to Phe1333 has biased composition (basic and acidic residues). The segment covering Ser1334–Ser1343 has biased composition (low complexity). The segment covering Pro1374–Ser1392 has biased composition (polar residues). Residues Lys1405–Ser1444 are compositionally biased toward basic and acidic residues. Ser1439, Ser1451, Ser1452, Ser1454, Ser1457, Ser1481, Ser1484, Ser1505, and Ser1507 each carry phosphoserine. Residues Ser1499–Glu1511 are compositionally biased toward acidic residues. Thr1552 is subject to Phosphothreonine. 3 positions are modified to phosphoserine: Ser1553, Ser1563, and Ser1575. The span at Asp1566–Ser1575 shows a compositional bias: acidic residues. Over residues Pro1576–Glu1587 the composition is skewed to basic and acidic residues. The span at Glu1606–Thr1624 shows a compositional bias: polar residues. Residues Phe1628–Ser1638 show a composition bias toward acidic residues. Ser1638 bears the Phosphoserine mark. Thr1640 carries the post-translational modification Phosphothreonine. Residues Ser1642 and Ser1647 each carry the phosphoserine modification. Residues Glu1650–Thr1667 show a composition bias toward polar residues. Residues Asp1707–Leu1720 show a composition bias toward acidic residues. Ser1708 and Ser1709 each carry phosphoserine. Residues Leu1721–Gln1734 are compositionally biased toward basic and acidic residues. Thr1760 is modified (phosphothreonine). A Phosphoserine modification is found at Ser1766. Basic and acidic residues predominate over residues Glu1775–Ser1790. Ser1795, Ser1800, Ser1808, and Ser1829 each carry phosphoserine. 2 disordered regions span residues Pro2104–Val2126 and Glu2261–Ala2377. Residues Thr2109–Val2126 show a composition bias toward low complexity. Positions Thr2277–Ser2291 are enriched in polar residues. Positions Gln2334 to Tyr2368 are enriched in pro residues. Ser2495 carries the post-translational modification Phosphoserine. Thr2686 carries an O-linked (GlcNAc) threonine glycan. Residue Ser2960 is glycosylated (O-linked (GlcNAc) serine). Position 2998 is a phosphothreonine (Thr2998). Disordered regions lie at residues Lys3334–Ser3443 and Lys3490–Pro3556. Residue Ser3358 is modified to Phosphoserine. Over residues Asp3361–Val3370 the composition is skewed to basic and acidic residues. Ser3372 bears the Phosphoserine mark. 2 positions are modified to phosphothreonine: Thr3376 and Thr3403. Acidic residues predominate over residues Thr3403–Asp3412. Positions Gly3495–Pro3507 are enriched in polar residues. Residues Ser3506, Ser3514, Ser3545, Ser3549, Ser3555, Ser3558, Ser3561, Ser3582, Ser3608, Ser3610, and Ser3616 each carry the phosphoserine modification. Disordered regions lie at residues Pro3576 to Met3679 and Asp3760 to Pro3797. Composition is skewed to polar residues over residues Lys3636–Gln3645 and Ser3661–Thr3673. Ser3763 is subject to Phosphoserine. A compositionally biased stretch (basic and acidic residues) spans Ser3773–Arg3785. Over residues Ala3787–Pro3797 the composition is skewed to polar residues. 3 positions are modified to phosphoserine: Ser4016, Ser4042, and Ser4132. 2 disordered regions span residues Ala4207–Leu4231 and Val4254–Ser4273. Residues Pro4210 to Leu4231 are compositionally biased toward low complexity. Polar residues predominate over residues Gly4257–Ser4273. A phosphoserine mark is found at Ser4286, Ser4290, Ser4293, Ser4322, and Ser4358. The disordered stretch occupies residues Arg4317–Thr4339. The PDZ domain maps to Arg4424–Leu4518. Residues Lys4574–His4620 form a disordered region. The segment covering Ala4578 to Val4601 has biased composition (low complexity). Ser4592 is subject to Phosphoserine. The region spanning Ile4622–Tyr4751 is the C2 1 domain. Ca(2+) contacts are provided by Asp4651 and Asp4657. Phosphoserine is present on Ser4706. Residues Asp4721, Asp4723, Ser4726, and Asp4729 each contribute to the Ca(2+) site. 2 disordered regions span residues Glu4758–Gln4834 and Gln4857–Ser4891. Composition is skewed to low complexity over residues His4766 to Ser4778 and Ser4805 to Glu4815. Over residues Pro4823–Gln4834 the composition is skewed to polar residues. Residues Ser4870–Ser4891 show a composition bias toward low complexity. One can recognise a C2 2 domain in the interval Val4933–His5058.

Interacts with BSN, ERC2/CAST1, RIMS1 and UNC13A. Interacts (via C-terminus) with TRIO (via N-terminus). Interacts with CTBP1. Interacts with SIAH1; this interaction negatively regulates SIAH1 E3 ligase activity. Directly interacts with GIT1 and GIT2. Ca(2+) is required as a cofactor. As to expression, highly expressed in brain. Moderately expressed in pituitary gland and pancreatic islets. Low levels found in stomach.

Its subcellular location is the presynaptic active zone. In terms of biological role, scaffold protein of the presynaptic cytomatrix at the active zone (CAZ) which is the place in the synapse where neurotransmitter is released. After synthesis, participates in the formation of Golgi-derived membranous organelles termed Piccolo-Bassoon transport vesicles (PTVs) that are transported along axons to sites of nascent synaptic contacts. At the presynaptic active zone, regulates the spatial organization of synaptic vesicle cluster, the protein complexes that execute membrane fusion and compensatory endocytosis. Organizes as well the readily releasable pool of synaptic vesicles and safeguards a fraction of them to be not immediately available for action potential-induced release. Also functions in processes other than assembly such as the regulation of specific presynaptic protein ubiquitination by interacting with SIAH1 or the regulation of presynaptic autophagy. Also mediates synapse to nucleus communication leading to reconfiguration of gene expression by associating with the transcriptional corepressor CTBP1 and by subsequently reducing the size of its pool available for nuclear import. The chain is Protein piccolo from Mus musculus (Mouse).